The chain runs to 49 residues: Large ribosomal subunit protein bL33 (49 aa).

The protein belongs to the bacterial ribosomal protein bL33 family.

The chain is Large ribosomal subunit protein bL33 from Heliobacterium modesticaldum (strain ATCC 51547 / Ice1).